The following is a 100-amino-acid chain: Putative pterin-4-alpha-carbinolamine dehydratase (100 aa).

Belongs to the pterin-4-alpha-carbinolamine dehydratase family.

It catalyses the reaction (4aS,6R)-4a-hydroxy-L-erythro-5,6,7,8-tetrahydrobiopterin = (6R)-L-erythro-6,7-dihydrobiopterin + H2O. In Rhodopseudomonas palustris (strain TIE-1), this protein is Putative pterin-4-alpha-carbinolamine dehydratase.